Reading from the N-terminus, the 319-residue chain is Tetrahydromethanopterin S-methyltransferase subunit H (319 aa).

The protein belongs to the MtrH family. The complex is composed of 8 subunits; MtrA, MtrB, MtrC, MtrD, MtrE, MtrF, MtrG and MtrH.

The catalysed reaction is 5-methyl-5,6,7,8-tetrahydromethanopterin + coenzyme M + 2 Na(+)(in) = 5,6,7,8-tetrahydromethanopterin + methyl-coenzyme M + 2 Na(+)(out). It functions in the pathway one-carbon metabolism; methanogenesis from CO(2); methyl-coenzyme M from 5,10-methylene-5,6,7,8-tetrahydromethanopterin: step 2/2. Its function is as follows. Part of a complex that catalyzes the formation of methyl-coenzyme M and tetrahydromethanopterin from coenzyme M and methyl-tetrahydromethanopterin. This is an energy-conserving, sodium-ion translocating step. MtrH catalyzes the transfer of the methyl group from methyl-tetrahydromethanopterin to the corrinoid prosthetic group of MtrA. This is Tetrahydromethanopterin S-methyltransferase subunit H from Methanococcus aeolicus (strain ATCC BAA-1280 / DSM 17508 / OCM 812 / Nankai-3).